A 309-amino-acid chain; its full sequence is MSQNVIRIATRKSPLALWQAEFVKAELEKFHEGLTVELLPMSTKGDIILDTPLAKVGGKGLFVKELEVAMLEDRADIAVHSMKDVPVDFPEGLGLEVICEREDPRDAFVSNNYKNISELPQGAVVGTSSLRRQCQIRASRPDLVIRDLRGNVGTRLGKLDAGNYDAIILAAAGLKRLKLEERITSFISAEESLPANGQGAVGIECRINDERVKALLAPLEHTETRHRVIAERAMNTHLEGGCQVPIGAYAEIQDDTLTLRGLVGNPDGSHIIEATKVGSKTDAQAIGVALAEELLSKGAKAILDAVYIK.

An S-(dipyrrolylmethanemethyl)cysteine modification is found at Cys-242.

The protein belongs to the HMBS family. Monomer. The cofactor is dipyrromethane.

It catalyses the reaction 4 porphobilinogen + H2O = hydroxymethylbilane + 4 NH4(+). It functions in the pathway porphyrin-containing compound metabolism; protoporphyrin-IX biosynthesis; coproporphyrinogen-III from 5-aminolevulinate: step 2/4. Its function is as follows. Tetrapolymerization of the monopyrrole PBG into the hydroxymethylbilane pre-uroporphyrinogen in several discrete steps. This is Porphobilinogen deaminase from Shewanella sediminis (strain HAW-EB3).